Reading from the N-terminus, the 228-residue chain is 5'-methylthioadenosine/S-adenosylhomocysteine nucleosidase (228 aa).

Catalysis depends on glutamate 11, which acts as the Proton acceptor. Substrate-binding positions include glycine 77, isoleucine 151, and 172–173 (ME). The active-site Proton donor is aspartate 196.

The protein belongs to the PNP/UDP phosphorylase family. MtnN subfamily.

The catalysed reaction is S-adenosyl-L-homocysteine + H2O = S-(5-deoxy-D-ribos-5-yl)-L-homocysteine + adenine. The enzyme catalyses S-methyl-5'-thioadenosine + H2O = 5-(methylsulfanyl)-D-ribose + adenine. It catalyses the reaction 5'-deoxyadenosine + H2O = 5-deoxy-D-ribose + adenine. Its pathway is amino-acid biosynthesis; L-methionine biosynthesis via salvage pathway; S-methyl-5-thio-alpha-D-ribose 1-phosphate from S-methyl-5'-thioadenosine (hydrolase route): step 1/2. Catalyzes the irreversible cleavage of the glycosidic bond in both 5'-methylthioadenosine (MTA) and S-adenosylhomocysteine (SAH/AdoHcy) to adenine and the corresponding thioribose, 5'-methylthioribose and S-ribosylhomocysteine, respectively. Also cleaves 5'-deoxyadenosine, a toxic by-product of radical S-adenosylmethionine (SAM) enzymes, into 5-deoxyribose and adenine. The protein is 5'-methylthioadenosine/S-adenosylhomocysteine nucleosidase of Staphylococcus aureus (strain bovine RF122 / ET3-1).